Reading from the N-terminus, the 701-residue chain is Elongation factor G (701 aa).

Residues 8–290 (ARYRNIGISA…AVIEYLPAPT (283 aa)) enclose the tr-type G domain. GTP is bound by residues 17 to 24 (AHIDAGKT), 88 to 92 (DTPGH), and 142 to 145 (NKMD).

The protein belongs to the TRAFAC class translation factor GTPase superfamily. Classic translation factor GTPase family. EF-G/EF-2 subfamily.

It localises to the cytoplasm. In terms of biological role, catalyzes the GTP-dependent ribosomal translocation step during translation elongation. During this step, the ribosome changes from the pre-translocational (PRE) to the post-translocational (POST) state as the newly formed A-site-bound peptidyl-tRNA and P-site-bound deacylated tRNA move to the P and E sites, respectively. Catalyzes the coordinated movement of the two tRNA molecules, the mRNA and conformational changes in the ribosome. The chain is Elongation factor G from Sodalis glossinidius (strain morsitans).